Here is a 152-residue protein sequence, read N- to C-terminus: Nucleoplasmin-like protein (152 aa).

Positions 109–128 (EVVDMEEDDEEDDVAEDEED) are enriched in acidic residues. The interval 109 to 152 (EVVDMEEDDEEDDVAEDEEDEHPKKRAKIENAADGKNAKNNKKK) is disordered. Positions 136 to 145 (KIENAADGKN) are enriched in basic and acidic residues.

Belongs to the nucleoplasmin family. Decamer formed by two pentameric rings associated in a head-to-head fashion.

It localises to the nucleus. Binds to core histones and functions in the ATP-facilitated assembly of approximately regularly spaced nucleosomal arrays. May participate in parallel with other histone-binding proteins such as NAP-1. Its function is as follows. Inactive for chromatin assembly. In vitro it appears to form a high molecular mass aggregate with the core histones. The sequence is that of Nucleoplasmin-like protein (Nlp) from Drosophila melanogaster (Fruit fly).